The chain runs to 85 residues: Large ribosomal subunit protein bL27 (85 aa).

The segment at 1–22 (MAHKKAGGSSRNGRDSESKRLG) is disordered.

It belongs to the bacterial ribosomal protein bL27 family.

In Tolumonas auensis (strain DSM 9187 / NBRC 110442 / TA 4), this protein is Large ribosomal subunit protein bL27.